The primary structure comprises 243 residues: Protein GIGAS CELL1 (243 aa).

In terms of assembly, interacts with APC/C activators such as FZR1, FZR2, FZR3, CDC20.1 and CDC20.5. Phosphorylated by CDKA-1 in complex with CYCA1-2. As to expression, expressed in rapidly dividing tissues such as shoot apical meristem and young leaves. Associated with cell division but also with specific cell types.

Its function is as follows. Negative regulator of the anaphase-promoting complex/cyclosome (APC/C) ubiquitin ligase required for proper mitotic and meiotic progression and cell fate determination. Involved in entry into both meiosis I and meiosis II. Prevents endomitosis by preferentially inhibiting APC/C(CDC20). Required for megagametophyte and endosperm development. Triggers mitotic cyclins (e.g. CYCB1-1 and CYCB1-2) accumulation. Confers immunity to bacterial pathogens (e.g. Pseudomonas syringae pv. tomato DC3000), which is associated with increased expression of disease resistance (R) genes. GIG1 and PANS1 are part of a network linking centromere cohesion and cell cycle progression through control of APC/C activity. In Arabidopsis thaliana (Mouse-ear cress), this protein is Protein GIGAS CELL1 (GIG1).